Consider the following 436-residue polypeptide: Histidinol dehydrogenase (436 aa).

NAD(+)-binding residues include Tyr135, Gln197, and Asn220. Positions 243, 265, and 268 each coordinate substrate. Positions 265 and 268 each coordinate Zn(2+). Active-site proton acceptor residues include Glu334 and His335. Substrate-binding residues include His335, Asp368, Glu422, and His427. Position 368 (Asp368) interacts with Zn(2+). A Zn(2+)-binding site is contributed by His427.

It belongs to the histidinol dehydrogenase family. Zn(2+) serves as cofactor.

It catalyses the reaction L-histidinol + 2 NAD(+) + H2O = L-histidine + 2 NADH + 3 H(+). It functions in the pathway amino-acid biosynthesis; L-histidine biosynthesis; L-histidine from 5-phospho-alpha-D-ribose 1-diphosphate: step 9/9. Functionally, catalyzes the sequential NAD-dependent oxidations of L-histidinol to L-histidinaldehyde and then to L-histidine. In Deinococcus radiodurans (strain ATCC 13939 / DSM 20539 / JCM 16871 / CCUG 27074 / LMG 4051 / NBRC 15346 / NCIMB 9279 / VKM B-1422 / R1), this protein is Histidinol dehydrogenase.